Here is a 432-residue protein sequence, read N- to C-terminus: Short/branched chain specific acyl-CoA dehydrogenase, mitochondrial (432 aa).

The transit peptide at 1 to 33 (MEGLAVRLLRGSRLLRRNFPTCLSSWKIPPHVS) directs the protein to the mitochondrion. An N6-acetyllysine; alternate modification is found at Lys70. Residue Lys70 is modified to N6-succinyllysine; alternate. FAD contacts are provided by residues 174–183 (FCLSEAGAGS) and 207–209 (WIS). Ser183 is a substrate binding site. Ser183 carries the phosphoserine modification. The substrate site is built by Tyr229 and Tyr283. The residue at position 284 (Lys284) is an N6-acetyllysine; alternate. Lys284 bears the N6-succinyllysine; alternate mark. 291 to 294 (NEGR) contributes to the substrate binding site. FAD is bound by residues Arg319, Gln330, and 387 to 391 (EWMGG). Glu414 functions as the Proton acceptor in the catalytic mechanism. 416 to 418 (ASN) lines the FAD pocket. Position 426 is an N6-acetyllysine (Lys426).

The protein belongs to the acyl-CoA dehydrogenase family. In terms of assembly, homotetramer. Requires FAD as cofactor.

It is found in the mitochondrion matrix. It catalyses the reaction 2-methylbutanoyl-CoA + oxidized [electron-transfer flavoprotein] + H(+) = (2E)-2-methylbut-2-enoyl-CoA + reduced [electron-transfer flavoprotein]. The catalysed reaction is (2S)-2-methylbutanoyl-CoA + oxidized [electron-transfer flavoprotein] + H(+) = (2E)-2-methylbut-2-enoyl-CoA + reduced [electron-transfer flavoprotein]. It carries out the reaction (2R)-2-methylbutanoyl-CoA + oxidized [electron-transfer flavoprotein] + H(+) = ethylacryloyl-CoA + reduced [electron-transfer flavoprotein]. The enzyme catalyses butanoyl-CoA + oxidized [electron-transfer flavoprotein] + H(+) = (2E)-butenoyl-CoA + reduced [electron-transfer flavoprotein]. It catalyses the reaction 2-methylpropanoyl-CoA + oxidized [electron-transfer flavoprotein] + H(+) = 2-methylpropenoyl-CoA + reduced [electron-transfer flavoprotein]. The catalysed reaction is hexanoyl-CoA + oxidized [electron-transfer flavoprotein] + H(+) = (2E)-hexenoyl-CoA + reduced [electron-transfer flavoprotein]. It carries out the reaction valproyl-CoA + oxidized [electron-transfer flavoprotein] + H(+) = (2E)-2-propylpent-2-enoyl-CoA + reduced [electron-transfer flavoprotein]. It participates in lipid metabolism; mitochondrial fatty acid beta-oxidation. Its pathway is amino-acid degradation; L-isoleucine degradation. Functionally, short and branched chain specific acyl-CoA dehydrogenase that catalyzes the removal of one hydrogen from C-2 and C-3 of the fatty acyl-CoA thioester, resulting in the formation of trans-2-enoyl-CoA. Among the different mitochondrial acyl-CoA dehydrogenases, acts specifically on short and branched chain acyl-CoA derivatives such as (S)-2-methylbutyryl-CoA as well as short straight chain acyl-CoAs such as butyryl-CoA. Plays an important role in the metabolism of L-isoleucine by catalyzing the dehydrogenation of 2-methylbutyryl-CoA, one of the steps of the L-isoleucine catabolic pathway. Can also act on valproyl-CoA, a metabolite of the valproic acid drug. This Pongo abelii (Sumatran orangutan) protein is Short/branched chain specific acyl-CoA dehydrogenase, mitochondrial (ACADSB).